A 57-amino-acid polypeptide reads, in one-letter code: Preprotein translocase subunit SecG (57 aa).

The Cytoplasmic portion of the chain corresponds to 1 to 33; sequence MARRRRYEGLNPFVAAGLIKFSEEGELERIKLT. A helical membrane pass occupies residues 34–55; the sequence is PKSAVVISVALIAAILVLNLIH. The Extracellular portion of the chain corresponds to 56–57; it reads PL.

Belongs to the SEC61-beta family. In terms of assembly, component of the protein translocase complex. Heterotrimer consisting of alpha (SecY), beta (SecG) and gamma (SecE) subunits. Can form oligomers of the heterotrimer.

The protein resides in the cell membrane. Involved in protein export. The function of the beta subunit is unknown, but it may be involved in stabilization of the trimeric complex. The sequence is that of Preprotein translocase subunit SecG from Pyrobaculum neutrophilum (strain DSM 2338 / JCM 9278 / NBRC 100436 / V24Sta) (Thermoproteus neutrophilus).